Here is a 94-residue protein sequence, read N- to C-terminus: Pyrimidine/purine nucleoside phosphorylase (94 aa).

It belongs to the nucleoside phosphorylase PpnP family.

It carries out the reaction a purine D-ribonucleoside + phosphate = a purine nucleobase + alpha-D-ribose 1-phosphate. It catalyses the reaction adenosine + phosphate = alpha-D-ribose 1-phosphate + adenine. The enzyme catalyses cytidine + phosphate = cytosine + alpha-D-ribose 1-phosphate. The catalysed reaction is guanosine + phosphate = alpha-D-ribose 1-phosphate + guanine. It carries out the reaction inosine + phosphate = alpha-D-ribose 1-phosphate + hypoxanthine. It catalyses the reaction thymidine + phosphate = 2-deoxy-alpha-D-ribose 1-phosphate + thymine. The enzyme catalyses uridine + phosphate = alpha-D-ribose 1-phosphate + uracil. The catalysed reaction is xanthosine + phosphate = alpha-D-ribose 1-phosphate + xanthine. Functionally, catalyzes the phosphorolysis of diverse nucleosides, yielding D-ribose 1-phosphate and the respective free bases. Can use uridine, adenosine, guanosine, cytidine, thymidine, inosine and xanthosine as substrates. Also catalyzes the reverse reactions. The sequence is that of Pyrimidine/purine nucleoside phosphorylase from Vibrio campbellii (strain ATCC BAA-1116).